A 328-amino-acid polypeptide reads, in one-letter code: Probable nicotianamine synthase 6 (328 aa).

The protein belongs to the nicotianamine synthase (NAS)-like family.

It carries out the reaction 3 S-adenosyl-L-methionine = nicotianamine + 3 S-methyl-5'-thioadenosine + 3 H(+). Synthesizes nicotianamine, a polyamine that is the first intermediate in the synthesis of the phytosiderophores of the mugineic acid type found in gramineae which serves as a sensor for the physiological iron status within the plant, and/or might be involved in the transport of iron. In Hordeum vulgare (Barley), this protein is Probable nicotianamine synthase 6 (NAS6).